The following is a 735-amino-acid chain: Phosphoribosylformylglycinamidine synthase subunit PurL (735 aa).

The active site involves H50. 2 residues coordinate ATP: Y53 and K92. Position 94 (E94) interacts with Mg(2+). Residues 95-98 (SHNH) and R117 contribute to the substrate site. Catalysis depends on H96, which acts as the Proton acceptor. Position 118 (D118) interacts with Mg(2+). Q241 contributes to the substrate binding site. D269 is a Mg(2+) binding site. 313–315 (ESQ) lines the substrate pocket. 2 residues coordinate ATP: D495 and G532. N533 serves as a coordination point for Mg(2+). S535 serves as a coordination point for substrate.

This sequence belongs to the FGAMS family. In terms of assembly, monomer. Part of the FGAM synthase complex composed of 1 PurL, 1 PurQ and 2 PurS subunits.

It is found in the cytoplasm. The enzyme catalyses N(2)-formyl-N(1)-(5-phospho-beta-D-ribosyl)glycinamide + L-glutamine + ATP + H2O = 2-formamido-N(1)-(5-O-phospho-beta-D-ribosyl)acetamidine + L-glutamate + ADP + phosphate + H(+). The protein operates within purine metabolism; IMP biosynthesis via de novo pathway; 5-amino-1-(5-phospho-D-ribosyl)imidazole from N(2)-formyl-N(1)-(5-phospho-D-ribosyl)glycinamide: step 1/2. Its function is as follows. Part of the phosphoribosylformylglycinamidine synthase complex involved in the purines biosynthetic pathway. Catalyzes the ATP-dependent conversion of formylglycinamide ribonucleotide (FGAR) and glutamine to yield formylglycinamidine ribonucleotide (FGAM) and glutamate. The FGAM synthase complex is composed of three subunits. PurQ produces an ammonia molecule by converting glutamine to glutamate. PurL transfers the ammonia molecule to FGAR to form FGAM in an ATP-dependent manner. PurS interacts with PurQ and PurL and is thought to assist in the transfer of the ammonia molecule from PurQ to PurL. The polypeptide is Phosphoribosylformylglycinamidine synthase subunit PurL (Bartonella henselae (strain ATCC 49882 / DSM 28221 / CCUG 30454 / Houston 1) (Rochalimaea henselae)).